The following is a 368-amino-acid chain: Trans-enoyl reductase thnE (368 aa).

53–56 lines the NADP(+) pocket; that stretch reads VDVK. Residue 140–147 participates in substrate binding; the sequence is LATATAAY. Residues 179–182, 202–205, tyrosine 220, and 267–268 each bind NADP(+); these read STAT, SPSN, and VE. 289–293 contributes to the substrate binding site; that stretch reads VMTVW. 358-359 is an NADP(+) binding site; sequence PS.

Belongs to the zinc-containing alcohol dehydrogenase family. Monomer.

It carries out the reaction malate + 6 malonyl-CoA + acetyl-CoA + 2 AH2 + 2 S-adenosyl-L-methionine + 5 NADPH + 9 H(+) = trihazone A + 2 A + 2 S-adenosyl-L-homocysteine + 6 CO2 + 5 NADP(+) + 7 CoA + 6 H2O. It functions in the pathway secondary metabolite biosynthesis. Trans-enoyl reductase; part of the gene cluster that produces the tetronate natural products trihazones. The PKS-NRPS synthetase thnA with the help of the trans-enoyl reductase thnE are responsible for the synthesis of the carboxylmethyl containing trihazone A. The PKS portion of thnA synthesizes beta-keto-triene chain from one acetyl-CoA and 6 equivalents of malonyl-CoA, in collaboration with thnE, which selectively reduces the enoyl intermediate during the first and fourth iteration of the PKS. The NRPS domain selects and activates malate, of which the alpha-hydroxyl group attacks the completed polyketide acyl-S-ACP chain to form the ester product. Intramolecular Dieckmann cyclization catalyzed by the terminal reductase domain releases the product as trihazone A from the PKS-NPRS. The pathway begins with the formation of trihazone A by the hybrid PKS-NRPS synthetase thnA and the trans-enoyl reductase thnE. Trihazone A is further decarboxylated by the 2-oxoglutarate-dependent dioxygenase thnC to produce trihazone D. The function of the FAD-dependent monooxygenase thnD has still to be identified. This Trichoderma harzianum (Hypocrea lixii) protein is Trans-enoyl reductase thnE.